The following is a 443-amino-acid chain: Methylenetetrahydrofolate--tRNA-(uracil-5-)-methyltransferase TrmFO (443 aa).

8–13 (GAGLAG) lines the FAD pocket.

The protein belongs to the MnmG family. TrmFO subfamily. Requires FAD as cofactor.

The protein localises to the cytoplasm. The catalysed reaction is uridine(54) in tRNA + (6R)-5,10-methylene-5,6,7,8-tetrahydrofolate + NADH + H(+) = 5-methyluridine(54) in tRNA + (6S)-5,6,7,8-tetrahydrofolate + NAD(+). The enzyme catalyses uridine(54) in tRNA + (6R)-5,10-methylene-5,6,7,8-tetrahydrofolate + NADPH + H(+) = 5-methyluridine(54) in tRNA + (6S)-5,6,7,8-tetrahydrofolate + NADP(+). In terms of biological role, catalyzes the folate-dependent formation of 5-methyl-uridine at position 54 (M-5-U54) in all tRNAs. This is Methylenetetrahydrofolate--tRNA-(uracil-5-)-methyltransferase TrmFO from Thermus thermophilus (strain ATCC BAA-163 / DSM 7039 / HB27).